A 319-amino-acid polypeptide reads, in one-letter code: MDQLAQTEKYSPFRFFSAEQWSRFRADTPLTLSEDEFRRLRSLNDPVDLEEVKRIYLSLSRLLSAHVEASQLLFRQRQAFFNAVDIVKTPFIIGIAGSVAVGKSTTARVLKELLARWPSSPKVDLITTDGFLLPNEVLRRENLMERKGFPDSYDVGALLRFLSGIKSALPDVRAPVYSHLTYDVIPGEFVTIDRPDILIFEGINVLQPGKLPQDGKIVPFLSDFFDFAIYIDADEKLIHEWYISRFMRLRETAFRNPDSFFHRYSQLSEEAARAIAEGLWSNINLKNLRENILPTRARADLILRKGADHLVEEVALRKL.

An ATP-binding site is contributed by 97-104 (GSVAVGKS).

It belongs to the prokaryotic pantothenate kinase family.

The protein localises to the cytoplasm. It catalyses the reaction (R)-pantothenate + ATP = (R)-4'-phosphopantothenate + ADP + H(+). Its pathway is cofactor biosynthesis; coenzyme A biosynthesis; CoA from (R)-pantothenate: step 1/5. This chain is Pantothenate kinase, found in Mesorhizobium japonicum (strain LMG 29417 / CECT 9101 / MAFF 303099) (Mesorhizobium loti (strain MAFF 303099)).